A 48-amino-acid chain; its full sequence is Large ribosomal subunit protein bL36c (48 aa).

It belongs to the bacterial ribosomal protein bL36 family.

It is found in the plastid. It localises to the chloroplast. The chain is Large ribosomal subunit protein bL36c from Rhodomonas salina (Cryptomonas salina).